A 496-amino-acid polypeptide reads, in one-letter code: Ribose import ATP-binding protein RbsA (496 aa).

ABC transporter domains are found at residues 5 to 242 (IEMK…VGRS) and 252 to 496 (SQIG…TGGE). Residue 37-44 (GENGAGKS) participates in ATP binding.

Belongs to the ABC transporter superfamily. Ribose importer (TC 3.A.1.2.1) family. As to quaternary structure, the complex is composed of an ATP-binding protein (RbsA), two transmembrane proteins (RbsC) and a solute-binding protein (RbsB).

Its subcellular location is the cell membrane. The enzyme catalyses D-ribose(out) + ATP + H2O = D-ribose(in) + ADP + phosphate + H(+). Functionally, part of the ABC transporter complex RbsABC involved in ribose import. Responsible for energy coupling to the transport system. The sequence is that of Ribose import ATP-binding protein RbsA from Bacillus cereus (strain ATCC 14579 / DSM 31 / CCUG 7414 / JCM 2152 / NBRC 15305 / NCIMB 9373 / NCTC 2599 / NRRL B-3711).